A 462-amino-acid polypeptide reads, in one-letter code: A-type ATP synthase subunit B (462 aa).

Belongs to the ATPase alpha/beta chains family. As to quaternary structure, has multiple subunits with at least A(3), B(3), C, D, E, F, H, I and proteolipid K(x).

The protein localises to the cell membrane. Component of the A-type ATP synthase that produces ATP from ADP in the presence of a proton gradient across the membrane. The B chain is a regulatory subunit. The chain is A-type ATP synthase subunit B from Methanococcus maripaludis (strain C5 / ATCC BAA-1333).